Consider the following 104-residue polypeptide: UPF0473 protein SH1304 (104 aa).

It belongs to the UPF0473 family.

In Staphylococcus haemolyticus (strain JCSC1435), this protein is UPF0473 protein SH1304.